A 546-amino-acid chain; its full sequence is Phosphomethylpyrimidine synthase (546 aa).

Residues Asn145, Met174, Tyr203, His239, 259–261, 300–303, and Glu339 each bind substrate; these read SRG and DGLR. Position 343 (His343) interacts with Zn(2+). Tyr366 contacts substrate. Position 407 (His407) interacts with Zn(2+). [4Fe-4S] cluster is bound by residues Cys487, Cys490, and Cys495.

Belongs to the ThiC family. The cofactor is [4Fe-4S] cluster.

The enzyme catalyses 5-amino-1-(5-phospho-beta-D-ribosyl)imidazole + S-adenosyl-L-methionine = 4-amino-2-methyl-5-(phosphooxymethyl)pyrimidine + CO + 5'-deoxyadenosine + formate + L-methionine + 3 H(+). It functions in the pathway cofactor biosynthesis; thiamine diphosphate biosynthesis. Functionally, catalyzes the synthesis of the hydroxymethylpyrimidine phosphate (HMP-P) moiety of thiamine from aminoimidazole ribotide (AIR) in a radical S-adenosyl-L-methionine (SAM)-dependent reaction. The polypeptide is Phosphomethylpyrimidine synthase (Mycobacterium marinum (strain ATCC BAA-535 / M)).